We begin with the raw amino-acid sequence, 732 residues long: Trehalose phosphorylase (732 aa).

The propeptide occupies Met-1–Ser-25.

It belongs to the glycosyltransferase group 1 family. Glycosyltransferase 4 subfamily. As to quaternary structure, homodimer.

The catalysed reaction is alpha,alpha-trehalose + phosphate = alpha-D-glucose + alpha-D-glucose 1-phosphate. With respect to regulation, activity abolished by 1 mM Cu(2+). 0.1 mM Cu(2+) reduces trehalose phosphorolysis to 76% and trehalose synthesis to 48% of maximum activity. 1 mM Zn(2+) abolishes trehalose synthesis, and reduces trehalose phosphorolysis to 40% of maximum activity. Unaffected by EDTA. Reversibly catalyzes the synthesis and degradation of trehalose from glucose and alpha-D-glucose 1-phosphate. The equilibrium lies in the direction of trehalose synthesis. This Grifola frondosa (Maitake) protein is Trehalose phosphorylase.